Consider the following 40-residue polypeptide: Photosystem II reaction center protein X (40 aa).

A helical transmembrane segment spans residues 10–30; it reads WSLVWGTVIVVIPVTVGLVFI.

The protein belongs to the PsbX family. Type 1 subfamily. In terms of assembly, PSII is composed of 1 copy each of membrane proteins PsbA, PsbB, PsbC, PsbD, PsbE, PsbF, PsbH, PsbI, PsbJ, PsbK, PsbL, PsbM, PsbT, PsbX, PsbY, PsbZ, Psb30/Ycf12, peripheral proteins PsbO, CyanoQ (PsbQ), PsbU, PsbV and a large number of cofactors. It forms dimeric complexes.

The protein localises to the cellular thylakoid membrane. Its function is as follows. Involved in the binding and/or turnover of quinones at the Q(B) site of photosystem II (PSII). PSII is a light-driven water plastoquinone oxidoreductase, using light energy to abstract electrons from H(2)O, generating a proton gradient subsequently used for ATP formation. The chain is Photosystem II reaction center protein X from Crocosphaera subtropica (strain ATCC 51142 / BH68) (Cyanothece sp. (strain ATCC 51142)).